Reading from the N-terminus, the 193-residue chain is MSPTPSSGPVIAPAPKGILDPATGRPVGAHDPYFLEVKHELSDKGFFVATADDLITWARTGSLMWMTFGLACCAVEMMQVSMPRYDVERFGFAPRASPRQSDVMIVAGTLTNKMAPALRKVYDQMPEPRYVISMGSCANGGGYYHYSYSVVRGCDRIVPIDIYVPGCPPTAEALLYGVLLLQKKIRRTGTIER.

[4Fe-4S] cluster is bound by residues Cys-72, Cys-73, Cys-137, and Cys-167.

Belongs to the complex I 20 kDa subunit family. In terms of assembly, NDH-1 is composed of 14 different subunits. Subunits NuoB, C, D, E, F, and G constitute the peripheral sector of the complex. Requires [4Fe-4S] cluster as cofactor.

The protein localises to the cell inner membrane. It catalyses the reaction a quinone + NADH + 5 H(+)(in) = a quinol + NAD(+) + 4 H(+)(out). Functionally, NDH-1 shuttles electrons from NADH, via FMN and iron-sulfur (Fe-S) centers, to quinones in the respiratory chain. The immediate electron acceptor for the enzyme in this species is believed to be ubiquinone. Couples the redox reaction to proton translocation (for every two electrons transferred, four hydrogen ions are translocated across the cytoplasmic membrane), and thus conserves the redox energy in a proton gradient. This Bradyrhizobium sp. (strain ORS 278) protein is NADH-quinone oxidoreductase subunit B.